We begin with the raw amino-acid sequence, 332 residues long: Adenosine receptor A2b (332 aa).

Topologically, residues M1–A8 are extracellular. Residues L9–G33 form a helical membrane-spanning segment. Topologically, residues A34–N43 are cytoplasmic. Residues Y44–I67 traverse the membrane as a helical segment. Topologically, residues S68–C78 are extracellular. A disulfide bridge connects residues C78 and C171. Residues L79–V101 form a helical membrane-spanning segment. Over D102–R121 the chain is Cytoplasmic. A helical membrane pass occupies residues A122–W144. The Extracellular segment spans residues N145–P178. N-linked (GlcNAc...) asparagine glycosylation is found at N153 and N163. Adenosine is bound at residue E174. A helical transmembrane segment spans residues M179–I203. Over K204–S235 the chain is Cytoplasmic. The chain crosses the membrane as a helical span at residues L236 to F259. N254 is a binding site for adenosine. Residues H260–K267 lie on the Extracellular side of the membrane. A helical membrane pass occupies residues P268–A291. Adenosine contacts are provided by S279 and H280. At Y292–L332 the chain is on the cytoplasmic side. The S-palmitoyl cysteine moiety is linked to residue C311.

This sequence belongs to the G-protein coupled receptor 1 family.

The protein localises to the cell membrane. Its function is as follows. Receptor for adenosine. The activity of this receptor is mediated by G proteins which activate adenylyl cyclase. The polypeptide is Adenosine receptor A2b (Adora2b) (Rattus norvegicus (Rat)).